The primary structure comprises 379 residues: Glucose-1-phosphate adenylyltransferase (379 aa).

Residues G164, 179-180, and S190 each bind alpha-D-glucose 1-phosphate; that span reads EK.

Belongs to the bacterial/plant glucose-1-phosphate adenylyltransferase family. In terms of assembly, homotetramer.

The catalysed reaction is alpha-D-glucose 1-phosphate + ATP + H(+) = ADP-alpha-D-glucose + diphosphate. Its pathway is glycan biosynthesis; glycogen biosynthesis. Its function is as follows. Involved in the biosynthesis of ADP-glucose, a building block required for the elongation reactions to produce glycogen. Catalyzes the reaction between ATP and alpha-D-glucose 1-phosphate (G1P) to produce pyrophosphate and ADP-Glc. In Lactiplantibacillus plantarum (strain ATCC BAA-793 / NCIMB 8826 / WCFS1) (Lactobacillus plantarum), this protein is Glucose-1-phosphate adenylyltransferase.